A 2025-amino-acid chain; its full sequence is E3 ubiquitin-protein ligase TRIP12 (2025 aa).

Positions methionine 1–glycine 10 are enriched in polar residues. Residues methionine 1–glutamate 404 are disordered. Residue serine 2 is modified to N-acetylserine. At serine 12 the chain carries Phosphoserine. Residues arginine 18–aspartate 27 show a composition bias toward polar residues. Basic and acidic residues predominate over residues aspartate 48–arginine 70. Serine 77, serine 85, and serine 100 each carry phosphoserine. Polar residues-rich tracts occupy residues proline 78–serine 88, glutamate 99–proline 108, and glutamate 119–lysine 132. Composition is skewed to low complexity over residues serine 154 to threonine 166 and proline 175 to valine 216. Lysine 181 is modified (N6-acetyllysine). The segment covering proline 280–proline 290 has biased composition (polar residues). Phosphoserine occurs at positions 310 and 312. Positions glutamine 326–arginine 338 are enriched in polar residues. A compositionally biased stretch (basic and acidic residues) spans glycine 346–aspartate 358. Polar residues predominate over residues asparagine 362 to alanine 371. Residues glycine 379–glutamate 397 show a composition bias toward low complexity. One can recognise a WWE domain in the interval methionine 755 to lysine 869. A disordered region spans residues glutamate 970 to serine 1077. Phosphoserine is present on serine 975. A compositionally biased stretch (low complexity) spans glycine 983–alanine 1006. Serine 1024 and serine 1030 each carry phosphoserine. The span at lysine 1034 to lysine 1047 shows a compositional bias: basic residues. Position 1049 is a phosphoserine (serine 1049). Residues proline 1050–asparagine 1059 show a composition bias toward basic and acidic residues. A compositionally biased stretch (low complexity) spans lysine 1062 to serine 1073. 5 positions are modified to phosphoserine: serine 1063, serine 1350, serine 1355, serine 1362, and serine 1409. A Phosphothreonine modification is found at threonine 1410. 2 disordered regions span residues serine 1440–lysine 1466 and threonine 1601–aspartate 1620. Lysine 1458 is modified (N6-acetyllysine). Position 1460 is a phosphoserine (serine 1460). The segment at glutamate 1529–proline 1603 is K-box. In terms of domain architecture, HECT spans proline 1918–serine 2025. The Glycyl thioester intermediate role is filled by cysteine 1992.

It belongs to the UPL family. K-HECT subfamily. As to quaternary structure, interacts with MYC; leading to disrupt interaction with isoform p19ARF/ARF of CDKN2A. Interacts with TRADD; leading to disrupt interaction with isoform p19ARF/ARF of CDKN2A. Interacts with SMARCC1; leading to disrupt interaction with SMARCE1.

It localises to the nucleus. It is found in the nucleoplasm. The enzyme catalyses S-ubiquitinyl-[E2 ubiquitin-conjugating enzyme]-L-cysteine + [acceptor protein]-L-lysine = [E2 ubiquitin-conjugating enzyme]-L-cysteine + N(6)-ubiquitinyl-[acceptor protein]-L-lysine.. The protein operates within protein modification; protein ubiquitination. In terms of biological role, E3 ubiquitin-protein ligase involved in ubiquitin fusion degradation (UFD) pathway and regulation of DNA repair. Part of the ubiquitin fusion degradation (UFD) pathway, a process that mediates ubiquitination of protein at their N-terminus, regardless of the presence of lysine residues in target proteins. Acts as a key regulator of DNA damage response by acting as a suppressor of RNF168, an E3 ubiquitin-protein ligase that promotes accumulation of 'Lys-63'-linked histone H2A and H2AX at DNA damage sites, thereby acting as a guard against excessive spreading of ubiquitinated chromatin at damaged chromosomes. In normal cells, mediates ubiquitination and degradation of isoform p19ARF/ARF of CDKN2A, a lysine-less tumor suppressor required for p53/TP53 activation under oncogenic stress. In cancer cells, however, isoform p19ARF/ARF and TRIP12 are located in different cell compartments, preventing isoform p19ARF/ARF ubiquitination and degradation. Does not mediate ubiquitination of isoform p16-INK4a of CDKN2A. Also catalyzes ubiquitination of NAE1 and SMARCE1, leading to their degradation. Ubiquitination and degradation of target proteins is regulated by interaction with proteins such as MYC, TRADD or SMARCC1, which disrupt the interaction between TRIP12 and target proteins. Mediates ubiquitination of ASXL1: following binding to N(6)-methyladenosine methylated DNA, ASXL1 is ubiquitinated by TRIP12, leading to its degradation and subsequent inactivation of the PR-DUB complex. In Rattus norvegicus (Rat), this protein is E3 ubiquitin-protein ligase TRIP12 (Trip12).